The primary structure comprises 91 residues: Small ribosomal subunit protein uS19 (91 aa).

The protein belongs to the universal ribosomal protein uS19 family.

Its function is as follows. Protein S19 forms a complex with S13 that binds strongly to the 16S ribosomal RNA. This is Small ribosomal subunit protein uS19 from Shouchella clausii (strain KSM-K16) (Alkalihalobacillus clausii).